We begin with the raw amino-acid sequence, 156 residues long: MPRRREVPKRVVLPDPKYKEEVIAKFANVMMRDGKKSTAEKIVYGALEMVAERSKSDALEIFRKAIDNVRPVVEVKSRRVGGATYQVPVEIRSDRRMALAMRWLRDSARKRNEKSMGNRLAAEILEAAENRGNAVRKREETHRMAEANKAFAHFRW.

This sequence belongs to the universal ribosomal protein uS7 family. In terms of assembly, part of the 30S ribosomal subunit. Contacts proteins S9 and S11.

Its function is as follows. One of the primary rRNA binding proteins, it binds directly to 16S rRNA where it nucleates assembly of the head domain of the 30S subunit. Is located at the subunit interface close to the decoding center, probably blocks exit of the E-site tRNA. The sequence is that of Small ribosomal subunit protein uS7 from Acidithiobacillus ferrooxidans (strain ATCC 53993 / BNL-5-31) (Leptospirillum ferrooxidans (ATCC 53993)).